A 389-amino-acid polypeptide reads, in one-letter code: NAD-dependent protein deacetylase sirtuin-2 (389 aa).

Residues 1-34 (MAEPDPSHPLETQAGKVQEAQDSDSDSEGGAAGG) form a disordered region. Ala2 is subject to N-acetylalanine. 3 positions are modified to phosphoserine: Ser23, Ser25, and Ser27. The short motif at 41 to 51 (LRNLFSQTLSL) is the Nuclear export signal element. Ser53 is subject to Phosphoserine. The Deacetylase sirtuin-type domain maps to 57-338 (RLLDELTLEG…LALAELLGWK (282 aa)). Residues 85 to 89 (AGIST) and 95 to 97 (DFR) contribute to the NAD(+) site. At Ser100 the chain carries Phosphoserine. 167 to 170 (QNID) is a binding site for NAD(+). His187 (proton acceptor) is an active-site residue. Positions 195 and 200 each coordinate Zn(2+). A Phosphoserine modification is found at Ser207. Zn(2+) contacts are provided by Cys221 and Cys224. NAD(+) is bound by residues 262–263 (TS), 286–288 (NKE), and Cys324. The segment at 351 to 389 (SIDAQSGAGVPNPSTSASPKKSPPPAKDEARTTEREKPQ) is disordered. The segment covering 361-370 (PNPSTSASPK) has biased composition (low complexity). Ser368 is modified (phosphoserine; by CDK2 and CDK5). Ser372 is modified (phosphoserine). The span at 376–389 (AKDEARTTEREKPQ) shows a compositional bias: basic and acidic residues.

This sequence belongs to the sirtuin family. Class I subfamily. Interacts with CDC20, FOXO3 and FZR1. Associates with microtubules in primary cortical mature neurons. Homotrimer. Isoform 1 and isoform 2 interact (via both phosphorylated, unphosphorylated, active or inactive forms) with HDAC6; the interaction is necessary for the complex to interact with alpha-tubulin, suggesting that these proteins belong to a large complex that deacetylates the cytoskeleton. Interacts with FOXO1; the interaction is disrupted upon serum-starvation or oxidative stress, leading to increased level of acetylated FOXO1 and induction of autophagy. Interacts with RELA; the interaction occurs in the cytoplasm and is increased in a TNF-alpha-dependent manner. Interacts with HOXA10; the interaction is direct. Interacts with YWHAB and YWHAG; the interactions occur in a AKT-dependent manner and increase SIRT2-dependent TP53 deacetylation. Interacts with MAPK1/ERK2 and MAPK3/ERK1; the interactions increase SIRT2 stability and deacetylation activity. Interacts (phosphorylated form) with KMT5A isoform 2; the interaction is direct, stimulates KMT5A-mediated methyltransferase activity on histone at 'Lys-20' (H4K20me1) and is increased in a H(2)O(2)-induced oxidative stress-dependent manner. Interacts with G6PD; the interaction is enhanced by H(2)O(2) treatment. Interacts with a G1/S-specific cyclin E-CDK2 complex. Interacts with AURKA, CDK5R1 (p35 form) and CDK5 and HIF1A. Isoform 1, isoform 2 and isoform 5 interact (via C-terminus region) with EP300. Interacts with the tRNA ligase SARS1; recruited to the VEGFA promoter via interaction with SARS1. Interacts with BEX4; negatively regulates alpha-tubulin deacetylation by SIRT2. Zn(2+) serves as cofactor. In terms of processing, phosphorylated at phosphoserine and phosphothreonine. Phosphorylated at Ser-368 by a mitotic kinase CDK1/cyclin B at the G2/M transition; phosphorylation regulates the delay in cell-cycle progression. Phosphorylated at Ser-368 by a mitotic kinase G1/S-specific cyclin E/Cdk2 complex; phosphorylation inactivates SIRT2-mediated alpha-tubulin deacetylation and thereby negatively regulates cell adhesion, cell migration and neurite outgrowth during neuronal differentiation. Phosphorylated by cyclin A/Cdk2 and p35-Cdk5 complexes and to a lesser extent by the cyclin D3/Cdk4 and cyclin B/Cdk1, in vitro. Dephosphorylated at Ser-368 by CDC14A and CDC14B around early anaphase. Acetylated by EP300; acetylation leads both to the decreased of SIRT2-mediated alpha-tubulin deacetylase activity and SIRT2-mediated down-regulation of TP53 transcriptional activity. Post-translationally, ubiquitinated. Isoform 1 is expressed in heart, liver and skeletal muscle, weakly expressed in the cortex. Isoform 2 is strongly expressed in the cortex, weakly expressed in heart and liver. Weakly expressed in several malignancies including breast, liver, brain, kidney and prostate cancers compared to normal tissues. Weakly expressed in glioma cell lines compared to normal brain tissues (at protein level). Widely expressed. Highly expressed in heart, brain and skeletal muscle, while it is weakly expressed in placenta and lung. Down-regulated in many gliomas suggesting that it may act as a tumor suppressor gene in human gliomas possibly through the regulation of microtubule network.

The protein resides in the nucleus. Its subcellular location is the cytoplasm. It is found in the perinuclear region. It localises to the cytoskeleton. The protein localises to the microtubule organizing center. The protein resides in the centrosome. Its subcellular location is the centriole. It is found in the spindle. It localises to the midbody. The protein localises to the chromosome. The protein resides in the perikaryon. Its subcellular location is the cell projection. It is found in the growth cone. It localises to the myelin membrane. The enzyme catalyses N(6)-acetyl-L-lysyl-[protein] + NAD(+) + H2O = 2''-O-acetyl-ADP-D-ribose + nicotinamide + L-lysyl-[protein]. The catalysed reaction is N(6)-tetradecanoyl-L-lysyl-[protein] + NAD(+) + H2O = 2''-O-tetradecanoyl-ADP-D-ribose + nicotinamide + L-lysyl-[protein]. It catalyses the reaction N(6)-hexadecanoyl-L-lysyl-[protein] + NAD(+) + H2O = 2''-O-hexadecanoyl-ADP-D-ribose + nicotinamide + L-lysyl-[protein]. With respect to regulation, inhibited by Sirtinol, A3 and M15 small molecules. Inhibited by nicotinamide. Inhibited by a macrocyclic peptide inhibitor S2iL5. Inhibited by EP300-induced acetylation. NAD-dependent protein deacetylase, which deacetylates internal lysines on histone and alpha-tubulin as well as many other proteins such as key transcription factors. Participates in the modulation of multiple and diverse biological processes such as cell cycle control, genomic integrity, microtubule dynamics, cell differentiation, metabolic networks, and autophagy. Plays a major role in the control of cell cycle progression and genomic stability. Functions in the antephase checkpoint preventing precocious mitotic entry in response to microtubule stress agents, and hence allowing proper inheritance of chromosomes. Positively regulates the anaphase promoting complex/cyclosome (APC/C) ubiquitin ligase complex activity by deacetylating CDC20 and FZR1, then allowing progression through mitosis. Associates both with chromatin at transcriptional start sites (TSSs) and enhancers of active genes. Plays a role in cell cycle and chromatin compaction through epigenetic modulation of the regulation of histone H4 'Lys-20' methylation (H4K20me1) during early mitosis. Specifically deacetylates histone H4 at 'Lys-16' (H4K16ac) between the G2/M transition and metaphase enabling H4K20me1 deposition by KMT5A leading to ulterior levels of H4K20me2 and H4K20me3 deposition throughout cell cycle, and mitotic S-phase progression. Deacetylates KMT5A modulating KMT5A chromatin localization during the mitotic stress response. Also deacetylates histone H3 at 'Lys-57' (H3K56ac) during the mitotic G2/M transition. Upon bacterium Listeria monocytogenes infection, deacetylates 'Lys-18' of histone H3 in a receptor tyrosine kinase MET- and PI3K/Akt-dependent manner, thereby inhibiting transcriptional activity and promoting late stages of listeria infection. During oocyte meiosis progression, may deacetylate histone H4 at 'Lys-16' (H4K16ac) and alpha-tubulin, regulating spindle assembly and chromosome alignment by influencing microtubule dynamics and kinetochore function. Deacetylates histone H4 at 'Lys-16' (H4K16ac) at the VEGFA promoter and thereby contributes to regulate expression of VEGFA, a key regulator of angiogenesis. Deacetylates alpha-tubulin at 'Lys-40' and hence controls neuronal motility, oligodendroglial cell arbor projection processes and proliferation of non-neuronal cells. Phosphorylation at Ser-368 by a G1/S-specific cyclin E-CDK2 complex inactivates SIRT2-mediated alpha-tubulin deacetylation, negatively regulating cell adhesion, cell migration and neurite outgrowth during neuronal differentiation. Deacetylates PARD3 and participates in the regulation of Schwann cell peripheral myelination formation during early postnatal development and during postinjury remyelination. Involved in several cellular metabolic pathways. Plays a role in the regulation of blood glucose homeostasis by deacetylating and stabilizing phosphoenolpyruvate carboxykinase PCK1 activity in response to low nutrient availability. Acts as a key regulator in the pentose phosphate pathway (PPP) by deacetylating and activating the glucose-6-phosphate G6PD enzyme, and therefore, stimulates the production of cytosolic NADPH to counteract oxidative damage. Maintains energy homeostasis in response to nutrient deprivation as well as energy expenditure by inhibiting adipogenesis and promoting lipolysis. Attenuates adipocyte differentiation by deacetylating and promoting FOXO1 interaction to PPARG and subsequent repression of PPARG-dependent transcriptional activity. Plays a role in the regulation of lysosome-mediated degradation of protein aggregates by autophagy in neuronal cells. Deacetylates FOXO1 in response to oxidative stress or serum deprivation, thereby negatively regulating FOXO1-mediated autophagy. Deacetylates a broad range of transcription factors and co-regulators regulating target gene expression. Deacetylates transcriptional factor FOXO3 stimulating the ubiquitin ligase SCF(SKP2)-mediated FOXO3 ubiquitination and degradation. Deacetylates HIF1A and therefore promotes HIF1A degradation and inhibition of HIF1A transcriptional activity in tumor cells in response to hypoxia. Deacetylates RELA in the cytoplasm inhibiting NF-kappaB-dependent transcription activation upon TNF-alpha stimulation. Inhibits transcriptional activation by deacetylating p53/TP53 and EP300. Also deacetylates EIF5A. Functions as a negative regulator on oxidative stress-tolerance in response to anoxia-reoxygenation conditions. Plays a role as tumor suppressor. In addition to protein deacetylase activity, also has activity toward long-chain fatty acyl groups and mediates protein-lysine demyristoylation and depalmitoylation of target proteins, such as ARF6 and KRAS, thereby regulating their association with membranes. Functionally, deacetylates EP300, alpha-tubulin and histone H3 and H4. Its function is as follows. Lacks deacetylation activity, at least toward known SIRT2 targets. This Homo sapiens (Human) protein is NAD-dependent protein deacetylase sirtuin-2 (SIRT2).